Consider the following 126-residue polypeptide: Fumarate reductase subunit C (126 aa).

A run of 3 helical transmembrane segments spans residues 30-50 (IFVA…GAGG), 64-84 (VVVV…VTWF), and 105-125 (VLAG…WMVL).

It belongs to the FrdC family. Part of an enzyme complex containing four subunits: a flavoprotein (FrdA), an iron-sulfur protein (FrdB), and two hydrophobic anchor proteins (FrdC and FrdD).

It localises to the cell membrane. In terms of biological role, anchors the catalytic components of the fumarate reductase complex to the cell membrane, binds quinones. The chain is Fumarate reductase subunit C from Mycobacterium tuberculosis (strain ATCC 25177 / H37Ra).